We begin with the raw amino-acid sequence, 156 residues long: Small ribosomal subunit protein uS7 (156 aa).

This sequence belongs to the universal ribosomal protein uS7 family. Part of the 30S ribosomal subunit. Contacts proteins S9 and S11.

Its function is as follows. One of the primary rRNA binding proteins, it binds directly to 16S rRNA where it nucleates assembly of the head domain of the 30S subunit. Is located at the subunit interface close to the decoding center, probably blocks exit of the E-site tRNA. The protein is Small ribosomal subunit protein uS7 of Carsonella ruddii.